Here is a 525-residue protein sequence, read N- to C-terminus: Probable protein kinase UbiB (525 aa).

Residues 118–500 (EFERVPVASA…QRRTNRLLQA (383 aa)) enclose the Protein kinase domain. ATP-binding positions include 124–132 (VASASIAQV) and lysine 150. The active-site Proton acceptor is aspartate 285. The chain crosses the membrane as a helical span at residues 501 to 521 (LLVFGLAVGAGAVIARVLIVL).

The protein belongs to the ABC1 family. UbiB subfamily.

It localises to the cell inner membrane. It participates in cofactor biosynthesis; ubiquinone biosynthesis [regulation]. Functionally, is probably a protein kinase regulator of UbiI activity which is involved in aerobic coenzyme Q (ubiquinone) biosynthesis. This is Probable protein kinase UbiB from Burkholderia mallei (strain SAVP1).